We begin with the raw amino-acid sequence, 149 residues long: Deoxyuridine 5'-triphosphate nucleotidohydrolase (149 aa).

Substrate contacts are provided by residues 68-70, Asn81, 85-87, and Lys95; these read RSG and TVD.

It belongs to the dUTPase family. Mg(2+) serves as cofactor.

The enzyme catalyses dUTP + H2O = dUMP + diphosphate + H(+). It functions in the pathway pyrimidine metabolism; dUMP biosynthesis; dUMP from dCTP (dUTP route): step 2/2. In terms of biological role, this enzyme is involved in nucleotide metabolism: it produces dUMP, the immediate precursor of thymidine nucleotides and it decreases the intracellular concentration of dUTP so that uracil cannot be incorporated into DNA. This chain is Deoxyuridine 5'-triphosphate nucleotidohydrolase, found in Wolinella succinogenes (strain ATCC 29543 / DSM 1740 / CCUG 13145 / JCM 31913 / LMG 7466 / NCTC 11488 / FDC 602W) (Vibrio succinogenes).